Consider the following 476-residue polypeptide: MKILHASAEYFPYTKMGGLADMLASLTKEQSRTEEVYVALPLIGKLGKEPNWTGKEVGALLPQDAKEETIAVSLLAKARFREAIESGVKLYFFDSELFSGLNSIYGQADEHYRFAIFSYACYALSQILQVDVFHAHDWHTALSLTLQKNSTKPIPSLFTIHNLAYQGDHPFWMTGFLKEDPFYLITSPFDQDGKCNYMKAGILSAGQITTVSPGYREETLREPNGFGLSYVLKKRKADYTGILNGIDPDEWNPKVDKRIFQTYHLQNWKEGKRKNKEHLYREIGRPNVSLDLPLIGLIGRLTYQKGFPTFLQAFLERRHLPHRYVVLGSGDPETENAFFHLSDMMPDVFYFYKGYNESLAHQIEAASDFFLMPSLFEPCGLNQMYSHVYGTIPIVSRVGGLRDTVDESIDIQFKTGIVFEPNDKSSLGYALERANDLFVSPERDHVVKNMMNLDWTWTKRKLEYDRVYKIAIELLE.

Residue lysine 15 participates in ADP-alpha-D-glucose binding.

This sequence belongs to the glycosyltransferase 1 family. Bacterial/plant glycogen synthase subfamily.

It catalyses the reaction [(1-&gt;4)-alpha-D-glucosyl](n) + ADP-alpha-D-glucose = [(1-&gt;4)-alpha-D-glucosyl](n+1) + ADP + H(+). The protein operates within glycan biosynthesis; glycogen biosynthesis. Synthesizes alpha-1,4-glucan chains using ADP-glucose. This Leptospira biflexa serovar Patoc (strain Patoc 1 / Ames) protein is Glycogen synthase.